Reading from the N-terminus, the 1037-residue chain is Probable inorganic carbon transporter subunit DabA 1 (1037 aa).

Cys-460, Asp-462, His-719, and Cys-734 together coordinate Zn(2+).

It belongs to the inorganic carbon transporter (TC 9.A.2) DabA family. As to quaternary structure, forms a complex with DabB. It depends on Zn(2+) as a cofactor.

It localises to the cell inner membrane. In terms of biological role, part of an energy-coupled inorganic carbon pump. The sequence is that of Probable inorganic carbon transporter subunit DabA 1 from Nitrobacter winogradskyi (strain ATCC 25391 / DSM 10237 / CIP 104748 / NCIMB 11846 / Nb-255).